Reading from the N-terminus, the 401-residue chain is Exodeoxyribonuclease 7 large subunit (401 aa).

Belongs to the XseA family. As to quaternary structure, heterooligomer composed of large and small subunits.

The protein localises to the cytoplasm. It catalyses the reaction Exonucleolytic cleavage in either 5'- to 3'- or 3'- to 5'-direction to yield nucleoside 5'-phosphates.. Functionally, bidirectionally degrades single-stranded DNA into large acid-insoluble oligonucleotides, which are then degraded further into small acid-soluble oligonucleotides. This Clostridium botulinum (strain Hall / ATCC 3502 / NCTC 13319 / Type A) protein is Exodeoxyribonuclease 7 large subunit.